Consider the following 996-residue polypeptide: Sarcoplasmic/endoplasmic reticulum calcium ATPase 1 (996 aa).

At 1–48 (MENAHTKSPAECLSYFGVNEHTGLSPDQFKKNLDKFGYNELPAEEGKS) the chain is on the cytoplasmic side. Residues 49-69 (IWDLIVEQFEDLLVRILLLAA) traverse the membrane as a helical segment. The Lumenal portion of the chain corresponds to 70 to 89 (CISFVLAWFEEGEETITAFV). Residues 90-110 (EPFVILLILIANAIVGVWQER) traverse the membrane as a helical segment. Over 111–253 (NAEDAIEALK…QEKTPLQAKL (143 aa)) the chain is Cytoplasmic. The helical transmembrane segment at 254 to 273 (DEFGEQLSKVISLICVAVWA) threads the bilayer. At 274–295 (INIGHFNDPVHGGSWIRGAVYY) the chain is on the lumenal side. Residues 296–313 (FKIAVALAVAAIPEGLPA) traverse the membrane as a helical segment. 4 residues coordinate Ca(2+): Val-304, Ala-305, Ile-307, and Glu-309. The Cytoplasmic portion of the chain corresponds to 314–754 (VITTCLALGT…EEGRAIYNNM (441 aa)). Asp-351 serves as the catalytic 4-aspartylphosphate intermediate. Residues Asp-351 and Thr-353 each contribute to the Mg(2+) site. ATP is bound by residues Thr-353, Glu-442, Arg-489, Lys-512, Arg-557, Thr-622, Gly-623, Asp-624, Arg-675, and Lys-681. Asp-700 serves as a coordination point for Mg(2+). An ATP-binding site is contributed by Asn-703. The helical transmembrane segment at 755-774 (KQFIRYLISSNVGEVVCIFL) threads the bilayer. Ca(2+)-binding residues include Asn-765 and Glu-768. At 775-784 (TAALGLPEAL) the chain is on the lumenal side. The chain crosses the membrane as a helical span at residues 785-805 (IPVQLLWVNLVTDGLPATALG). The tract at residues 785–805 (IPVQLLWVNLVTDGLPATALG) is interaction with PLN. Residues Asn-793, Thr-796, and Asp-797 each contribute to the Ca(2+) site. The Cytoplasmic segment spans residues 806 to 825 (FNPPDLDIMGKPPRSPKEPL). A helical membrane pass occupies residues 826–848 (ISGWLFFRYMAIGGYVGAATVGG). The Lumenal segment spans residues 849–894 (AAWWFLYDSTGPAVTYYQLSHFMQCHNHNEDFTGVDCDIFEASPPM). Residues Cys-873 and Cys-885 are joined by a disulfide bond. The chain crosses the membrane as a helical span at residues 895–914 (TMALSVLVTIEMCNALNSLS). Residue Glu-905 participates in Ca(2+) binding. Residues 915-927 (ENQSLIRMPPWSN) lie on the Cytoplasmic side of the membrane. The chain crosses the membrane as a helical span at residues 928-946 (LWLMAAMTLSMSLHFMIIY). The interval 929–940 (WLMAAMTLSMSL) is interaction with PLN. The Lumenal portion of the chain corresponds to 947-961 (VDPLPMIFKLTHLTF). A helical transmembrane segment spans residues 962 to 982 (DQWLMVFKLSFPVILIDEVLK). Residues 983 to 996 (FFARNYIETGKEVK) are Cytoplasmic-facing.

The protein belongs to the cation transport ATPase (P-type) (TC 3.A.3) family. Type IIA subfamily. In terms of assembly, interacts with sarcolipin (SLN). Interacts with phospholamban (PLN). Interacts with myoregulin (MRLN). Interacts with DWORF. Requires Mg(2+) as cofactor.

It is found in the endoplasmic reticulum membrane. The protein resides in the sarcoplasmic reticulum membrane. It carries out the reaction Ca(2+)(in) + ATP + H2O = Ca(2+)(out) + ADP + phosphate + H(+). Inhibited by sarcolipin (SLN) and myoregulin (MRLN). Also shown to be inhibited by phospholamban (PLN) in vitro. Enhanced by DWORF; DWORF increases activity by displacing sarcolipin (SLN), phospholamban (PLN) and myoregulin (MRLN). Its function is as follows. Key regulator of striated muscle performance by acting as the major Ca(2+) ATPase responsible for the reuptake of cytosolic Ca(2+) into the sarcoplasmic reticulum. Catalyzes the hydrolysis of ATP coupled with the translocation of calcium from the cytosol to the sarcoplasmic reticulum lumen. Contributes to calcium sequestration involved in muscular excitation/contraction. The chain is Sarcoplasmic/endoplasmic reticulum calcium ATPase 1 (atp2a1) from Makaira nigricans (Atlantic blue marlin).